A 178-amino-acid polypeptide reads, in one-letter code: ATP-dependent protease subunit HslV (178 aa).

Threonine 7 is an active-site residue. 3 residues coordinate Na(+): glycine 162, cysteine 165, and threonine 168.

It belongs to the peptidase T1B family. HslV subfamily. A double ring-shaped homohexamer of HslV is capped on each side by a ring-shaped HslU homohexamer. The assembly of the HslU/HslV complex is dependent on binding of ATP.

Its subcellular location is the cytoplasm. The enzyme catalyses ATP-dependent cleavage of peptide bonds with broad specificity.. Its activity is regulated as follows. Allosterically activated by HslU binding. Functionally, protease subunit of a proteasome-like degradation complex believed to be a general protein degrading machinery. The polypeptide is ATP-dependent protease subunit HslV (Burkholderia orbicola (strain AU 1054)).